The sequence spans 128 residues: Neuromedin-S (128 aa).

The signal sequence occupies residues 1–27 (MRSEKHLLPLPPLLAICCLGTLHLSSG). 2 consecutive propeptides follow at residues 28-72 (FPQS…HEIY) and 75-100 (FLFQ…AEYT). N119 carries the post-translational modification Asparagine amide. Positions 123–128 (VSINEH) are excised as a propeptide.

It belongs to the NmU family. In terms of tissue distribution, expressed by the skin glands.

Its subcellular location is the secreted. In terms of biological role, neuromedin-S-17: stimulates uterine smooth muscle contraction (B similarity). Synthetic peptide NmS-17 induces calcium mobilization in CHO cells transfected with either human FM-3/GPR66 (EC(50)=0.085 nM) or FM-4/TGR-1 (EC(50)=0.231 nM) NmU/NmS receptors. This chain is Neuromedin-S (nms), found in Bombina variegata (Yellow-bellied toad).